We begin with the raw amino-acid sequence, 209 residues long: Probable GTP-binding protein EngB (209 aa).

The region spanning 27 to 201 (SGVEIAFAGR…ATKLDSWFAE (175 aa)) is the EngB-type G domain. GTP contacts are provided by residues 35 to 42 (GRSNAGKS), 62 to 66 (GRTQL), 80 to 83 (DLPG), 147 to 150 (TKAD), and 180 to 182 (YSA). Ser42 and Thr64 together coordinate Mg(2+).

The protein belongs to the TRAFAC class TrmE-Era-EngA-EngB-Septin-like GTPase superfamily. EngB GTPase family. The cofactor is Mg(2+).

Functionally, necessary for normal cell division and for the maintenance of normal septation. The protein is Probable GTP-binding protein EngB of Glaesserella parasuis serovar 5 (strain SH0165) (Haemophilus parasuis).